Reading from the N-terminus, the 191-residue chain is dTTP/UTP pyrophosphatase (191 aa).

Asp-69 serves as the catalytic Proton acceptor.

The protein belongs to the Maf family. YhdE subfamily. A divalent metal cation is required as a cofactor.

Its subcellular location is the cytoplasm. It catalyses the reaction dTTP + H2O = dTMP + diphosphate + H(+). It carries out the reaction UTP + H2O = UMP + diphosphate + H(+). In terms of biological role, nucleoside triphosphate pyrophosphatase that hydrolyzes dTTP and UTP. May have a dual role in cell division arrest and in preventing the incorporation of modified nucleotides into cellular nucleic acids. The polypeptide is dTTP/UTP pyrophosphatase (Pelotomaculum thermopropionicum (strain DSM 13744 / JCM 10971 / SI)).